A 285-amino-acid chain; its full sequence is N(G),N(G)-dimethylarginine dimethylaminohydrolase 1 (285 aa).

Alanine 2 carries the post-translational modification N-acetylalanine. Positions 30, 73, 78, 79, 98, and 145 each coordinate substrate. The active-site Proton donor is histidine 173. Cysteine 222 is modified (S-nitrosocysteine). Valine 268 provides a ligand contact to substrate. S-nitrosocysteine is present on cysteine 274. Cysteine 274 functions as the Nucleophile in the catalytic mechanism. Zn(2+) is bound at residue cysteine 274.

Monomer. As to expression, widely distributed, highest concentrations found in brain, brain cortex and kidney (at protein level).

It carries out the reaction N(omega),N(omega)-dimethyl-L-arginine + H2O = dimethylamine + L-citrulline. The enzyme catalyses N(omega)-methyl-L-arginine + H2O = L-citrulline + methylamine. Copurifies with a tightly bound zinc ion. Activated by release of zinc. His and other agents that promote the release of bound zinc ions activate the enzyme (in vitro). Inhibited by S-nitrosylation. Zinc protects the protein against S-nitrosylation. Its function is as follows. Hydrolyzes N(G),N(G)-dimethyl-L-arginine (ADMA) and N(G)-monomethyl-L-arginine (MMA) which act as inhibitors of NOS. Has therefore a role in the regulation of nitric oxide generation. This Bos taurus (Bovine) protein is N(G),N(G)-dimethylarginine dimethylaminohydrolase 1 (DDAH1).